Here is a 202-residue protein sequence, read N- to C-terminus: FMN-dependent NADH:quinone oxidoreductase (202 aa).

FMN is bound by residues S9 and 95–98 (MYNF).

Belongs to the azoreductase type 1 family. In terms of assembly, homodimer. FMN serves as cofactor.

The catalysed reaction is 2 a quinone + NADH + H(+) = 2 a 1,4-benzosemiquinone + NAD(+). It carries out the reaction N,N-dimethyl-1,4-phenylenediamine + anthranilate + 2 NAD(+) = 2-(4-dimethylaminophenyl)diazenylbenzoate + 2 NADH + 2 H(+). Functionally, quinone reductase that provides resistance to thiol-specific stress caused by electrophilic quinones. Its function is as follows. Also exhibits azoreductase activity. Catalyzes the reductive cleavage of the azo bond in aromatic azo compounds to the corresponding amines. The sequence is that of FMN-dependent NADH:quinone oxidoreductase from Chromobacterium violaceum (strain ATCC 12472 / DSM 30191 / JCM 1249 / CCUG 213 / NBRC 12614 / NCIMB 9131 / NCTC 9757 / MK).